The chain runs to 351 residues: Histidinol-phosphate aminotransferase (351 aa).

At lysine 221 the chain carries N6-(pyridoxal phosphate)lysine.

The protein belongs to the class-II pyridoxal-phosphate-dependent aminotransferase family. Histidinol-phosphate aminotransferase subfamily. Homodimer. Requires pyridoxal 5'-phosphate as cofactor.

The catalysed reaction is L-histidinol phosphate + 2-oxoglutarate = 3-(imidazol-4-yl)-2-oxopropyl phosphate + L-glutamate. It participates in amino-acid biosynthesis; L-histidine biosynthesis; L-histidine from 5-phospho-alpha-D-ribose 1-diphosphate: step 7/9. The chain is Histidinol-phosphate aminotransferase from Staphylococcus epidermidis (strain ATCC 35984 / DSM 28319 / BCRC 17069 / CCUG 31568 / BM 3577 / RP62A).